The sequence spans 154 residues: Large ribosomal subunit protein uL13 (154 aa).

This sequence belongs to the universal ribosomal protein uL13 family. Part of the 50S ribosomal subunit.

This protein is one of the early assembly proteins of the 50S ribosomal subunit, although it is not seen to bind rRNA by itself. It is important during the early stages of 50S assembly. This Allorhizobium ampelinum (strain ATCC BAA-846 / DSM 112012 / S4) (Agrobacterium vitis (strain S4)) protein is Large ribosomal subunit protein uL13.